We begin with the raw amino-acid sequence, 210 residues long: Orotate phosphoribosyltransferase (210 aa).

5-phospho-alpha-D-ribose 1-diphosphate-binding positions include arginine 94, lysine 98, histidine 100, and 120-128; that span reads EDLISTGGS. An orotate-binding site is contributed by serine 124.

It belongs to the purine/pyrimidine phosphoribosyltransferase family. PyrE subfamily. In terms of assembly, homodimer. Mg(2+) is required as a cofactor.

It catalyses the reaction orotidine 5'-phosphate + diphosphate = orotate + 5-phospho-alpha-D-ribose 1-diphosphate. The protein operates within pyrimidine metabolism; UMP biosynthesis via de novo pathway; UMP from orotate: step 1/2. In terms of biological role, catalyzes the transfer of a ribosyl phosphate group from 5-phosphoribose 1-diphosphate to orotate, leading to the formation of orotidine monophosphate (OMP). This is Orotate phosphoribosyltransferase from Bacillus cereus (strain ATCC 14579 / DSM 31 / CCUG 7414 / JCM 2152 / NBRC 15305 / NCIMB 9373 / NCTC 2599 / NRRL B-3711).